A 290-amino-acid chain; its full sequence is Alpha-1,2-colitosyltransferase (290 aa).

This sequence belongs to the glycosyltransferase 11 family. It depends on Does not require a metal cofactor. as a cofactor.

It carries out the reaction GDP-beta-L-colitose + beta-D-galactosyl-(1-&gt;3)-N-acetyl-D-glucosamine = alpha-L-colitosyl-(1-&gt;2)-beta-D-galactosyl-(1-&gt;3)-N-acetyl-D-glucosamine + GDP + H(+). The protein operates within bacterial outer membrane biogenesis; LPS O-antigen biosynthesis. With respect to regulation, addition of metal ions dramatically decreases the activity to 0-40%. Involved in the biosynthesis of the lipopolysaccharide (LPS) O-antigen region. Catalyzes the transfer of colitose from GDP-colitose to the galactose residue of beta-Gal-(1-&gt;3)-GlcNAc (lacto-N-biose) via an alpha1,2-linkage. Is specific for beta-Gal-(1-&gt;3)-GlcNAc, but can use GDP-L-fucose as the sugar donor with almost the same efficiency as GDP-L-colitose. The sequence is that of Alpha-1,2-colitosyltransferase from Escherichia coli.